An 871-amino-acid polypeptide reads, in one-letter code: DNA mismatch repair protein MutS (871 aa).

605–612 contacts ATP; that stretch reads GPNMGGKS. The disordered stretch occupies residues 791–840; sequence PQRPTSASVEQPVDSAKTETAATAEEPQQLSLFPTDEETKPKQPTKKERS. Over residues 827-840 the composition is skewed to basic and acidic residues; sequence EETKPKQPTKKERS.

It belongs to the DNA mismatch repair MutS family.

Its function is as follows. This protein is involved in the repair of mismatches in DNA. It is possible that it carries out the mismatch recognition step. This protein has a weak ATPase activity. This is DNA mismatch repair protein MutS from Shouchella clausii (strain KSM-K16) (Alkalihalobacillus clausii).